Reading from the N-terminus, the 422-residue chain is UDP-N-acetylglucosamine 1-carboxyvinyltransferase (422 aa).

Residue 22–23 participates in phosphoenolpyruvate binding; the sequence is KN. Residue Arg-95 participates in UDP-N-acetyl-alpha-D-glucosamine binding. The active-site Proton donor is Cys-119. Position 119 is a 2-(S-cysteinyl)pyruvic acid O-phosphothioketal (Cys-119). Residues 124 to 128, Asp-309, and Val-331 each bind UDP-N-acetyl-alpha-D-glucosamine; that span reads RPIDQ.

It belongs to the EPSP synthase family. MurA subfamily.

It localises to the cytoplasm. It catalyses the reaction phosphoenolpyruvate + UDP-N-acetyl-alpha-D-glucosamine = UDP-N-acetyl-3-O-(1-carboxyvinyl)-alpha-D-glucosamine + phosphate. The protein operates within cell wall biogenesis; peptidoglycan biosynthesis. Its function is as follows. Cell wall formation. Adds enolpyruvyl to UDP-N-acetylglucosamine. The chain is UDP-N-acetylglucosamine 1-carboxyvinyltransferase from Anaeromyxobacter dehalogenans (strain 2CP-C).